Consider the following 354-residue polypeptide: Protein-arginine kinase (354 aa).

The Phosphagen kinase C-terminal domain maps to 24 to 254 (IVLSSRIRLA…QQIIQQEKMA (231 aa)). Residues 27–31 (SSRIR), H92, R125, 176–180 (RASVM), and 207–212 (RGIYGE) contribute to the ATP site. Residues 337–342 (RDYRRA) carry the RDXXRA motif of the pArg binding pocket involved in allosteric regulation motif.

The protein belongs to the ATP:guanido phosphotransferase family.

It carries out the reaction L-arginyl-[protein] + ATP = N(omega)-phospho-L-arginyl-[protein] + ADP + H(+). Appears to be allosterically activated by the binding of pArg-containing polypeptides to the pArg-binding pocket localized in the C-terminal domain of McsB. Functionally, catalyzes the specific phosphorylation of arginine residues in a large number of proteins. Is part of the bacterial stress response system. Protein arginine phosphorylation has a physiologically important role and is involved in the regulation of many critical cellular processes, such as protein homeostasis, motility, competence, and stringent and stress responses, by regulating gene expression and protein activity. The sequence is that of Protein-arginine kinase from Bacillus cereus (strain ATCC 10987 / NRS 248).